We begin with the raw amino-acid sequence, 346 residues long: Protein pelota homolog (346 aa).

It belongs to the eukaryotic release factor 1 family. Pelota subfamily. Monomer. The cofactor is a divalent metal cation.

It localises to the cytoplasm. In terms of biological role, may function in recognizing stalled ribosomes, interact with stem-loop structures in stalled mRNA molecules, and effect endonucleolytic cleavage of the mRNA. May play a role in the release non-functional ribosomes and degradation of damaged mRNAs. Has endoribonuclease activity. This chain is Protein pelota homolog, found in Ignicoccus hospitalis (strain KIN4/I / DSM 18386 / JCM 14125).